The chain runs to 381 residues: Dual specificity protein phosphatase 6 (381 aa).

The 119-residue stretch at 30 to 148 (GNERLLLMDC…FQAEFSLHCE (119 aa)) folds into the Rhodanese domain. Residues 176 to 203 (SSSDIESDLDRDPNSATDSDGSPLSNSQ) are disordered. Over residues 189–203 (NSATDSDGSPLSNSQ) the composition is skewed to polar residues. In terms of domain architecture, Tyrosine-protein phosphatase spans 206–349 (FPVEILPFLY…LLDFERTLGL (144 aa)). Catalysis depends on Cys-293, which acts as the Phosphocysteine intermediate.

Belongs to the protein-tyrosine phosphatase family. Non-receptor class dual specificity subfamily. In terms of assembly, interacts with MAPK1/ERK2. Post-translationally, ubiquitinated by the SCF(FBXO31) complex, leading to its proteasomal degradation. Expressed in keratinocytes (at protein level).

The protein resides in the cytoplasm. It carries out the reaction O-phospho-L-tyrosyl-[protein] + H2O = L-tyrosyl-[protein] + phosphate. It catalyses the reaction O-phospho-L-seryl-[protein] + H2O = L-seryl-[protein] + phosphate. The catalysed reaction is O-phospho-L-threonyl-[protein] + H2O = L-threonyl-[protein] + phosphate. Functionally, dual specificity protein phosphatase, which mediates dephosphorylation and inactivation of MAP kinases. Has a specificity for the ERK family. Plays an important role in alleviating chronic postoperative pain. Necessary for the normal dephosphorylation of the long-lasting phosphorylated forms of spinal MAPK1/3 and MAP kinase p38 induced by peripheral surgery, which drives the resolution of acute postoperative allodynia. Also important for dephosphorylation of MAPK1/3 in local wound tissue, which further contributes to resolution of acute pain. Promotes cell differentiation by regulating MAPK1/MAPK3 activity and regulating the expression of AP1 transcription factors. The chain is Dual specificity protein phosphatase 6 (DUSP6) from Homo sapiens (Human).